The chain runs to 338 residues: Lipoate-protein ligase A (338 aa).

Positions 29 to 216 (PATQRVLFLW…AFFAHYGERV (188 aa)) constitute a BPL/LPL catalytic domain. Residues R71, 76-79 (GAVF), and K134 contribute to the ATP site. K134 is a binding site for (R)-lipoate.

It belongs to the LplA family. In terms of assembly, monomer.

The protein localises to the cytoplasm. The catalysed reaction is L-lysyl-[lipoyl-carrier protein] + (R)-lipoate + ATP = N(6)-[(R)-lipoyl]-L-lysyl-[lipoyl-carrier protein] + AMP + diphosphate + H(+). It functions in the pathway protein modification; protein lipoylation via exogenous pathway; protein N(6)-(lipoyl)lysine from lipoate: step 1/2. Its pathway is protein modification; protein lipoylation via exogenous pathway; protein N(6)-(lipoyl)lysine from lipoate: step 2/2. In terms of biological role, catalyzes both the ATP-dependent activation of exogenously supplied lipoate to lipoyl-AMP and the transfer of the activated lipoyl onto the lipoyl domains of lipoate-dependent enzymes. This chain is Lipoate-protein ligase A, found in Shigella boydii serotype 18 (strain CDC 3083-94 / BS512).